The following is a 450-amino-acid chain: MSLLQFSGLFVVWLLCTLFIATLTWFEFRRMRFNFNVFFSLLFLLTFFFGFPLTSVLVFRFDVGVAPPEILLQALLSAGCFYAVYYVTYKTRLRKRVADVPRRPLFTMNRVETNLTWVILMGIALVSVGIFFMHNGFLLFRLNSYSQIFSSEVSGVALKRFFYFFIPAMLVVYFLRQDSKAWLFFLVSTVAFGLLTYMIVGGTRANIIIAFAIFLFIGIIRGWISLWMLAAAGVLGIVGMFWLALKRYGMNVSGDEAFYTFLYLTRDTFSPWENLALLLQNYDNIDFQGLAPIVRDFYVFIPSWLWPGRPSMVLNSANYFTWEVLNNHSGLAISPTLIGSLVVMGGALFIPLGAIVVGLIIKWFDWLYELGNRETNRYKAAILHSFCFGAIFNMIVLAREGLDSFVSRVVFFIVVFGACLMIAKLLYWLFESAGLIHKRTKSSLRTQVEG.

11 helical membrane-spanning segments follow: residues 6 to 26, 37 to 57, 63 to 83, 118 to 138, 155 to 175, 181 to 201, 207 to 227, 228 to 248, 341 to 361, 378 to 398, and 410 to 430; these read FSGL…LTWF, VFFS…TSVL, VGVA…CFYA, VILM…NGFL, GVAL…VYFL, AWLF…MIVG, IIIA…ISLW, MLAA…LKRY, LVVM…GLII, YKAA…IVLA, and VFFI…YWLF.

Belongs to the WzyE family. Probably part of a complex composed of WzxE, WzyE and WzzE.

It is found in the cell inner membrane. It functions in the pathway bacterial outer membrane biogenesis; enterobacterial common antigen biosynthesis. Functionally, probably involved in the polymerization of enterobacterial common antigen (ECA) trisaccharide repeat units. This is Probable ECA polymerase from Escherichia coli O7:K1 (strain IAI39 / ExPEC).